Consider the following 530-residue polypeptide: Type 2 DNA topoisomerase 6 subunit B (530 aa).

Residues Asn-42, Asp-76, 97–98 (SK), 106–113 (GMYGLGVK), and Lys-427 contribute to the ATP site.

It belongs to the TOP6B family. In terms of assembly, homodimer. Heterotetramer of two Top6A and two Top6B chains.

It carries out the reaction ATP-dependent breakage, passage and rejoining of double-stranded DNA.. Functionally, relaxes both positive and negative superturns and exhibits a strong decatenase activity. This Saccharolobus islandicus (strain M.16.4 / Kamchatka #3) (Sulfolobus islandicus) protein is Type 2 DNA topoisomerase 6 subunit B.